A 392-amino-acid chain; its full sequence is Spermatogenesis associated 6-like protein (392 aa).

A phosphoserine mark is found at Ser-260 and Ser-263. Over residues 286-301 (SCLDSSQFGKSSSSKQ) the composition is skewed to low complexity. The disordered stretch occupies residues 286 to 305 (SCLDSSQFGKSSSSKQGDAD).

It belongs to the SPATA6 family.

The sequence is that of Spermatogenesis associated 6-like protein (SPATA6L) from Homo sapiens (Human).